A 355-amino-acid polypeptide reads, in one-letter code: N-acetyl-gamma-glutamyl-phosphate reductase (355 aa).

The active site involves C152.

Belongs to the NAGSA dehydrogenase family. Type 1 subfamily.

Its subcellular location is the cytoplasm. The enzyme catalyses N-acetyl-L-glutamate 5-semialdehyde + phosphate + NADP(+) = N-acetyl-L-glutamyl 5-phosphate + NADPH + H(+). It functions in the pathway amino-acid biosynthesis; L-arginine biosynthesis; N(2)-acetyl-L-ornithine from L-glutamate: step 3/4. Functionally, catalyzes the NADPH-dependent reduction of N-acetyl-5-glutamyl phosphate to yield N-acetyl-L-glutamate 5-semialdehyde. The protein is N-acetyl-gamma-glutamyl-phosphate reductase of Psychrobacter cryohalolentis (strain ATCC BAA-1226 / DSM 17306 / VKM B-2378 / K5).